The sequence spans 138 residues: Acidic phospholipase A2 Tbo-E6 (138 aa).

The first 16 residues, 1-16 (MRTLWILAVLLLGVKG), serve as a signal peptide directing secretion. Cystine bridges form between C42-C131, C44-C60, C59-C111, C65-C138, C66-C104, C73-C97, and C91-C102. Positions 43, 45, and 47 each coordinate Ca(2+). Residue H63 is part of the active site. D64 lines the Ca(2+) pocket. Residue D105 is part of the active site.

As to quaternary structure, monomer. Ca(2+) serves as cofactor. As to expression, expressed by the venom gland.

It is found in the secreted. The enzyme catalyses a 1,2-diacyl-sn-glycero-3-phosphocholine + H2O = a 1-acyl-sn-glycero-3-phosphocholine + a fatty acid + H(+). Its function is as follows. Snake venom phospholipase A2 (PLA2) that impairs hemostasis. It weakly inhibits ADP-induced platelet aggregation when tested on platelet rich plasma from human and rabbit blood (15-25% of inhibition at 5-10 ug of enzyme), and dose-dependently inhibits blood coagulation, possibly by inhibiting thrombin activation. Exhibits high hydrolytic activities toward L-dipalmitoyl phosphatidylcholine. PLA2 catalyzes the calcium-dependent hydrolysis of the 2-acyl groups in 3-sn-phosphoglycerides. This Craspedocephalus borneensis (Borneo pit viper) protein is Acidic phospholipase A2 Tbo-E6.